The chain runs to 912 residues: MMPSQITRSSHSSLPEVAPASGDATGVSEQTPQQARTVAFFSSGELAVAFGRTSAAPEQDSVRLLSALQRELDKQHPSWHTVAQLCQSLAEVGTTEQGWHQLASEDQLPALRELLDRCTHRLADMPAAHASHDSLSQACEGLRTARLHQSVARLTARPSSLARAMADLLTLTHLDPETLGAEPPVISSYTLFSHFVRTAKQRTADLNDSLQRQPDAVVSLLRSHADTLNDLEMLPGALQALTENCQDAPARNELRELAEVAGALLQLLLEHDLLPRLEEISIEPGEAPAPGHEPAEPRLTTRQALLKVGGNLVRKFDAYGALAPMDDKALLALMRTPAPHLSPDQMHAFLNKHVLHLTQEQRDIVSNTPLPFAPEEDIEARYGMGFDEKLRLALANGSLVLSEEQLARLGDLPSAATTTSDVVQTLLEKPSSALSEAERDMLGAIVQANAQGQLDAWRAHNEQLPAVLSRSGLPSDVKDELLSLNKSMNAELGTLKNGASLKSRVLASPAMLLALAPLPLAVAFVSKDNSYSSSLVAHFTKNAVFMAGLMMNELTNARTNVDHGLNRYFVTVLANAIVAQPTFARNEHLLEQVGFGIATAVASGAATLGVFNRESIVAAFKLAKSKLSRQDTGNARIPQEDHLAVVKHFDVSEHFAQQMKVATELYKQDKSITDIMNSSLTYLGTKSSEFQARFEVADALRAGLQLAEGERKADPDFYTKLGLVALTASIGAALVMLMKSMVGKADYAADGVWCVSEMLKLAMNPEVDMQKAVQVFKEIVGLNLVMTGFLGVNKVWNFLDKGIKGYASGAAVLTAANLTLPGMVGEVAGAAAGKGLSYLTDKGKAAHQAGRAAASWAGDYVSTSRLGSAVGTLQTAIPGRIAGGQVVAGLYDRFRYLTWSHPAPAPQAAGEP.

Residues 1–13 (MMPSQITRSSHSS) are compositionally biased toward polar residues. A disordered region spans residues 1 to 32 (MMPSQITRSSHSSLPEVAPASGDATGVSEQTP).

Belongs to the HopW family.

It localises to the secreted. This is Effector protein hopAE1 (hopAE1) from Pseudomonas savastanoi pv. phaseolicola (strain 1448A / Race 6) (Pseudomonas syringae pv. phaseolicola (strain 1448A / Race 6)).